Reading from the N-terminus, the 644-residue chain is Threonine--tRNA ligase (644 aa).

A TGS domain is found at Met1 to Thr61. Residues Asp242–Pro533 form a catalytic region. Residues Cys333, His384, and His510 each contribute to the Zn(2+) site.

Belongs to the class-II aminoacyl-tRNA synthetase family. In terms of assembly, homodimer. It depends on Zn(2+) as a cofactor.

The protein localises to the cytoplasm. The catalysed reaction is tRNA(Thr) + L-threonine + ATP = L-threonyl-tRNA(Thr) + AMP + diphosphate + H(+). In terms of biological role, catalyzes the attachment of threonine to tRNA(Thr) in a two-step reaction: L-threonine is first activated by ATP to form Thr-AMP and then transferred to the acceptor end of tRNA(Thr). Also edits incorrectly charged L-seryl-tRNA(Thr). The chain is Threonine--tRNA ligase from Psychrobacter cryohalolentis (strain ATCC BAA-1226 / DSM 17306 / VKM B-2378 / K5).